The following is a 183-amino-acid chain: Transmembrane protein 52B (183 aa).

An N-terminal signal peptide occupies residues 1–24; the sequence is MGVRVHVVAASALLYFILLSGTRC. Residues 40–60 traverse the membrane as a helical segment; it reads VHLWYIWLLVVIGALLLLCGL. Residues 158 to 183 are disordered; the sequence is DLPPVPEEKQLPPTEKESTRIVDSWN. Residues 163 to 177 are compositionally biased toward basic and acidic residues; the sequence is PEEKQLPPTEKESTR.

Its subcellular location is the membrane. The chain is Transmembrane protein 52B (TMEM52B) from Homo sapiens (Human).